The primary structure comprises 205 residues: Molybdopterin synthase catalytic subunit (205 aa).

Residues 1–36 (MQHPTLQPEVDPNPVVSSSSSSSSSNPLPAHLNPAN) are disordered. Substrate contacts are provided by residues 146-147 (HR), Lys162, and 169-171 (KRE). The segment at 179–205 (GEGEGEWRANRDTDSQGNCRGDKVAEG) is disordered. Positions 183–205 (GEWRANRDTDSQGNCRGDKVAEG) are enriched in basic and acidic residues.

Belongs to the MoaE family. MOCS2B subfamily. As to quaternary structure, heterotetramer; composed of 2 small (MOCS2A) and 2 large (MOCS2B) subunits.

Its subcellular location is the cytoplasm. It catalyses the reaction 2 [molybdopterin-synthase sulfur-carrier protein]-C-terminal-Gly-aminoethanethioate + cyclic pyranopterin phosphate + H2O = molybdopterin + 2 [molybdopterin-synthase sulfur-carrier protein]-C-terminal Gly-Gly + 2 H(+). The protein operates within cofactor biosynthesis; molybdopterin biosynthesis. In terms of biological role, catalytic subunit of the molybdopterin synthase complex, a complex that catalyzes the conversion of precursor Z into molybdopterin. Acts by mediating the incorporation of 2 sulfur atoms from thiocarboxylated MOCS2A into precursor Z to generate a dithiolene group. This Ajellomyces capsulatus (strain NAm1 / WU24) (Darling's disease fungus) protein is Molybdopterin synthase catalytic subunit.